The chain runs to 469 residues: MNPNQKIITIGSICMIVGIISLILQIGNIISIWVSHSIQTGNQNQPEICNQSIITYENNTWVNQTYVNISNTNFVTEQALAPVALAGNSSLCPISGWAIYSKDNGIRIGSKGDVFVIREPFISCSHLECRTFFLTQGALLNDKHSNGTVKDRSPYRTLMSCPIGESPSPYNSRFESVAWSASACHDGIGWLTIGISGPDNGAVAVLKYNGIITDTIKSWRNNILRTQESECACMNGSCFTIMTDGPSNGQASYKIFKIEKGKVVKSVELNAPNYHYEECSCYPDAGEIMCVCRDNWHGSNRPWVSFNQNLEYQIGYICSGVFGDNPRPNDGAGSCGPVSSNGAYGVKGFSFKYGKGVWIGRTKSTSSRSGFEMIWDPNGWTETDSSFSVKQDIVAITDWSGYSGSFVQHPELTGLDCMRPCFWVELIRGRPKENTIWTSGSSISFCGVNSDTVGWSWPDGAELPFTIDK.

At 1-6 (MNPNQK) the chain is on the intravirion side. Residues 7–27 (IITIGSICMIVGIISLILQIG) traverse the membrane as a helical segment. An involved in apical transport and lipid raft association region spans residues 11-33 (GSICMIVGIISLILQIGNIISIW). Residues 28–469 (NIISIWVSHS…GAELPFTIDK (442 aa)) are Virion surface-facing. Residues 36–90 (HSIQTGNQNQPEICNQSIITYENNTWVNQTYVNISNTNFVTEQALAPVALAGNSS) are hypervariable stalk region. Asparagine 50, asparagine 58, asparagine 63, asparagine 68, and asparagine 88 each carry an N-linked (GlcNAc...) asparagine; by host glycan. Residues 91-469 (LCPISGWAIY…GAELPFTIDK (379 aa)) are head of neuraminidase. Disulfide bonds link cysteine 92-cysteine 417, cysteine 124-cysteine 129, cysteine 184-cysteine 231, cysteine 233-cysteine 238, cysteine 279-cysteine 292, cysteine 281-cysteine 290, cysteine 318-cysteine 335, and cysteine 421-cysteine 446. Arginine 118 provides a ligand contact to substrate. N-linked (GlcNAc...) asparagine; by host glycosylation occurs at asparagine 146. Aspartate 151 acts as the Proton donor/acceptor in catalysis. Arginine 152 serves as a coordination point for substrate. Asparagine 235 carries an N-linked (GlcNAc...) asparagine; by host glycan. 277–278 (EE) serves as a coordination point for substrate. Arginine 293 lines the substrate pocket. Residues aspartate 294, glycine 298, and aspartate 324 each coordinate Ca(2+). Residue arginine 368 coordinates substrate. Tyrosine 402 acts as the Nucleophile in catalysis.

The protein belongs to the glycosyl hydrolase 34 family. As to quaternary structure, homotetramer. Requires Ca(2+) as cofactor. Post-translationally, N-glycosylated.

It localises to the virion membrane. It is found in the host apical cell membrane. It catalyses the reaction Hydrolysis of alpha-(2-&gt;3)-, alpha-(2-&gt;6)-, alpha-(2-&gt;8)- glycosidic linkages of terminal sialic acid residues in oligosaccharides, glycoproteins, glycolipids, colominic acid and synthetic substrates.. With respect to regulation, inhibited by the neuraminidase inhibitors zanamivir (Relenza) and oseltamivir (Tamiflu). These drugs interfere with the release of progeny virus from infected cells and are effective against all influenza strains. Resistance to neuraminidase inhibitors is quite rare. Catalyzes the removal of terminal sialic acid residues from viral and cellular glycoconjugates. Cleaves off the terminal sialic acids on the glycosylated HA during virus budding to facilitate virus release. Additionally helps virus spread through the circulation by further removing sialic acids from the cell surface. These cleavages prevent self-aggregation and ensure the efficient spread of the progeny virus from cell to cell. Otherwise, infection would be limited to one round of replication. Described as a receptor-destroying enzyme because it cleaves a terminal sialic acid from the cellular receptors. May facilitate viral invasion of the upper airways by cleaving the sialic acid moieties on the mucin of the airway epithelial cells. Likely to plays a role in the budding process through its association with lipid rafts during intracellular transport. May additionally display a raft-association independent effect on budding. Plays a role in the determination of host range restriction on replication and virulence. Sialidase activity in late endosome/lysosome traffic seems to enhance virus replication. The polypeptide is Neuraminidase (Influenza A virus (strain A/Chicken/Scotland/1959 H5N1)).